A 483-amino-acid polypeptide reads, in one-letter code: MGKALMVQGTMSGAGKSLLVAALCRIFTNLGYDVVPFKSQNMSLNSAPSIEGGEISRAQYLQALACRKKPSVKFNPILLKPEGNMRSQVVFMGRPIGSVSARDYMLSKKAELFEKAIEVLKELMREHDLVIIEGAGSPVEINLKDYDIANMRVAKAVNAPVILVADIDRGGSFAQIVGTMELLSEEERELVMGFIFNKFRGDASLLKPGFEFLEKRCGKPVLGVVPYIEHRLPEEDSLAEFPKVRGDLHIQIIKLPHISNFTDFEPLHWANGVDYVTRAEEIKGDLIIVPGSKNTVEDLLWMRENGIEDAIIEAHREGSFVVGICGGFQMLGKEIIDEVESKRGRVEGIGLLPAKTVFTGEKRTNHLKAEVLWEPARGMWVEGYEIRMGRSTSEKPFSVITSINGARAFEPEGAIGKRAFGTYLHGIFHNFAFTERFLNMLRAEKGLEPVKVEEWSIEEEIEKFTRVVRESVDVEYIIQRLGL.

In terms of domain architecture, GATase cobBQ-type spans 247 to 433; that stretch reads DLHIQIIKLP…LHGIFHNFAF (187 aa). Residue cysteine 325 is the Nucleophile of the active site. Histidine 425 is an active-site residue.

The protein belongs to the CobB/CobQ family. CobQ subfamily.

Its pathway is cofactor biosynthesis; adenosylcobalamin biosynthesis. Its function is as follows. Catalyzes amidations at positions B, D, E, and G on adenosylcobyrinic A,C-diamide. NH(2) groups are provided by glutamine, and one molecule of ATP is hydrogenolyzed for each amidation. The polypeptide is Probable cobyric acid synthase (cobQ) (Thermococcus kodakarensis (strain ATCC BAA-918 / JCM 12380 / KOD1) (Pyrococcus kodakaraensis (strain KOD1))).